A 505-amino-acid polypeptide reads, in one-letter code: Formate--tetrahydrofolate ligase (505 aa).

Belongs to the formate--tetrahydrofolate ligase family.

It catalyses the reaction (6S)-5,6,7,8-tetrahydrofolate + formate + ATP = (6R)-10-formyltetrahydrofolate + ADP + phosphate. Its pathway is one-carbon metabolism; tetrahydrofolate interconversion. The protein is Formate--tetrahydrofolate ligase (fhs) of Bifidobacterium longum (strain NCC 2705).